Consider the following 867-residue polypeptide: Leucine--tRNA ligase (867 aa).

The 'HIGH' region motif lies at 42-52 (PYPSGKLHMGH). The 'KMSKS' region signature appears at 631-635 (KMSKS). Lysine 634 provides a ligand contact to ATP.

It belongs to the class-I aminoacyl-tRNA synthetase family.

It is found in the cytoplasm. It catalyses the reaction tRNA(Leu) + L-leucine + ATP = L-leucyl-tRNA(Leu) + AMP + diphosphate. The chain is Leucine--tRNA ligase from Dichelobacter nodosus (strain VCS1703A).